A 367-amino-acid chain; its full sequence is WD repeat-containing protein 31 (367 aa).

WD repeat units follow at residues 53 to 90, 94 to 132, 137 to 175, 179 to 217, 221 to 264, 269 to 311, and 315 to 353; these read AFQEYSPAHMDTVSVVAALNSDLCVSGGKDKTVVAYNW, NVVKRFKGHEHEITKVACIPKSSQFFSASRDRMVMMWDL, QPRQQLCGHAMVVTGLAVSPDSSQLCTGSRDNTLLLWDV, QSVERASVSRNVVTHLCWVPREPYILQTSEDKTLRLWDS, QVAH…LWDL, NRIC…IWNQ, and ACLFTLSLDGSGPLTSLAVGDAISLLCASFNRGIHLLRM.

The chain is WD repeat-containing protein 31 (WDR31) from Homo sapiens (Human).